The sequence spans 141 residues: MPPKAAEKKPSTGGKAPAGGKAPAEKKEAGKKTAAAASGDKKKRGKTRKETYSSYIYKVLKQVHPDTGISTRAMSILNSFVNDIFERVATEASKLAAYNKKSTISSREIQTSVRLILPGELAKHAVSEGTKAVTKYSSSAK.

Positions 1 to 10 (MPPKAAEKKP) are enriched in basic and acidic residues. A disordered region spans residues 1–49 (MPPKAAEKKPSTGGKAPAGGKAPAEKKEAGKKTAAAASGDKKKRGKTRK). N6-acetyllysine; alternate occurs at positions 8 and 9. Residues lysine 8 and lysine 9 each participate in a glycyl lysine isopeptide (Lys-Gly) (interchain with G-Cter in SUMO); alternate cross-link. Low complexity predominate over residues 11 to 22 (STGGKAPAGGKA). Lysine 15 is subject to N6-acetyllysine. An N6-acetyllysine; alternate modification is found at lysine 26. Residue lysine 26 forms a Glycyl lysine isopeptide (Lys-Gly) (interchain with G-Cter in SUMO); alternate linkage. Residue lysine 27 forms a Glycyl lysine isopeptide (Lys-Gly) (interchain with G-Cter in SUMO) linkage. Residue lysine 135 forms a Glycyl lysine isopeptide (Lys-Gly) (interchain with G-Cter in ubiquitin) linkage.

Belongs to the histone H2B family. As to quaternary structure, the nucleosome is a histone octamer containing two molecules each of H2A, H2B, H3 and H4 assembled in one H3-H4 heterotetramer and two H2A-H2B heterodimers. The octamer wraps approximately 147 bp of DNA. Monoubiquitinated by the ubc2-bre1 complex to form H2BK123ub1. H2BK123ub1 gives a specific tag for epigenetic transcriptional activation and is also prerequisite for H3K4me and H3K79me formation. H2BK123ub1 also modulates the formation of double-strand breaks during meiosis and is a prerequisite for DNA-damage checkpoint activation. In terms of processing, acetylated by gcn5 to form H2BK11ac and H2BK16ac. H2BK16ac can also be formed by esa1. Acetylation of N-terminal lysines and particularly formation of H2BK11acK16ac has a positive effect on transcription. Post-translationally, sumoylation to form H2BK6su or H2BK7su, and probably also H2BK16su or H2BK17su, occurs preferentially near the telomeres and represses gene transcription.

The protein localises to the nucleus. It is found in the chromosome. Core component of nucleosome. Nucleosomes wrap and compact DNA into chromatin, limiting DNA accessibility to the cellular machineries which require DNA as a template. Histones thereby play a central role in transcription regulation, DNA repair, DNA replication and chromosomal stability. DNA accessibility is regulated via a complex set of post-translational modifications of histones, also called histone code, and nucleosome remodeling. This is Histone H2B (htb1) from Aspergillus niger (strain ATCC MYA-4892 / CBS 513.88 / FGSC A1513).